The sequence spans 667 residues: E3 ubiquitin-protein ligase Midline-1 (667 aa).

Residues 10-60 (CPICLELFEDPLLLPCAHSLCFNCAHRILVSHCATNESVESITAFQCPTCR) form an RING-type zinc finger. Residues S92 and S96 each carry the phosphoserine modification. B box-type zinc fingers lie at residues 116–165 (KVLC…IEPI) and 172–212 (GLMC…VAAL). 12 residues coordinate Zn(2+): C119, C122, C134, C137, C142, C145, H150, H159, C175, H178, C198, and H204. Residues 205 to 264 (RDHQVAALSERYDKLKQNLESNLTNLIKRNTELETLLAKLIQTCQHVEVNASRQEAKLTE) are a coiled coil. One can recognise a COS domain in the interval 320 to 379 (LKENDHARFLQTAKNITERVSMATASSQVLIPEINLNDTFDTFALDFSREKKLLECLDYL). The 104-residue stretch at 381–484 (APNPPTIREE…EPGKLKTNSQ (104 aa)) folds into the Fibronectin type-III domain. A compositionally biased stretch (polar residues) spans 471 to 485 (SRSSEPGKLKTNSQP). Residues 471–524 (SRSSEPGKLKTNSQPFKLDPKSAHRKLKVSHDNLTVERDESSSKKSHTPERFTS) form a disordered region. The B30.2/SPRY domain occupies 482-659 (NSQPFKLDPK…IITGLPIPDH (178 aa)). Basic and acidic residues predominate over residues 499-520 (VSHDNLTVERDESSSKKSHTPE). S511 carries the phosphoserine modification.

It belongs to the TRIM/RBCC family. As to quaternary structure, homodimer or heterodimer with MID2. Interacts with IGBP1. Interacts with TRIM16. In terms of processing, phosphorylated on serine and threonine residues. As to expression, in the fetus, highest expression found in kidney, followed by brain and lung. Expressed at low levels in fetal liver. In the adult, most abundant in heart, placenta and brain.

Its subcellular location is the cytoplasm. It localises to the cytoskeleton. The protein resides in the spindle. It carries out the reaction S-ubiquitinyl-[E2 ubiquitin-conjugating enzyme]-L-cysteine + [acceptor protein]-L-lysine = [E2 ubiquitin-conjugating enzyme]-L-cysteine + N(6)-ubiquitinyl-[acceptor protein]-L-lysine.. Its function is as follows. Has E3 ubiquitin ligase activity towards IGBP1, promoting its monoubiquitination, which results in deprotection of the catalytic subunit of protein phosphatase PP2A, and its subsequent degradation by polyubiquitination. This is E3 ubiquitin-protein ligase Midline-1 (MID1) from Homo sapiens (Human).